Here is a 203-residue protein sequence, read N- to C-terminus: Glycerol-3-phosphate acyltransferase (203 aa).

Transmembrane regions (helical) follow at residues 3–23 (NLIL…LILA), 61–81 (ILTV…ASFL), 87–107 (VLWT…FLGF), 118–138 (GVLA…WFLV), 144–164 (ISSL…FIIH), and 172–192 (THAP…PNIV).

This sequence belongs to the PlsY family. As to quaternary structure, probably interacts with PlsX.

The protein localises to the cell inner membrane. It carries out the reaction an acyl phosphate + sn-glycerol 3-phosphate = a 1-acyl-sn-glycero-3-phosphate + phosphate. It functions in the pathway lipid metabolism; phospholipid metabolism. In terms of biological role, catalyzes the transfer of an acyl group from acyl-phosphate (acyl-PO(4)) to glycerol-3-phosphate (G3P) to form lysophosphatidic acid (LPA). This enzyme utilizes acyl-phosphate as fatty acyl donor, but not acyl-CoA or acyl-ACP. This is Glycerol-3-phosphate acyltransferase from Campylobacter concisus (strain 13826).